The primary structure comprises 44 residues: Large ribosomal subunit protein bL34 (44 aa).

Basic residues-rich tracts occupy residues 1–22 (MKRT…RARM) and 31–44 (IRAR…RLSV). Residues 1 to 44 (MKRTLGGTSRKRKRTSGFRARMRTPDGRNVIRARRKKGRHRLSV) form a disordered region.

It belongs to the bacterial ribosomal protein bL34 family.

The polypeptide is Large ribosomal subunit protein bL34 (Nostoc punctiforme (strain ATCC 29133 / PCC 73102)).